The chain runs to 128 residues: Ribosome-binding factor A (128 aa).

The protein belongs to the RbfA family. Monomer. Binds 30S ribosomal subunits, but not 50S ribosomal subunits or 70S ribosomes.

Its subcellular location is the cytoplasm. Functionally, one of several proteins that assist in the late maturation steps of the functional core of the 30S ribosomal subunit. Associates with free 30S ribosomal subunits (but not with 30S subunits that are part of 70S ribosomes or polysomes). Required for efficient processing of 16S rRNA. May interact with the 5'-terminal helix region of 16S rRNA. The polypeptide is Ribosome-binding factor A (Herminiimonas arsenicoxydans).